Here is a 134-residue protein sequence, read N- to C-terminus: Photosystem II lipoprotein Psb27 (134 aa).

The N-terminal stretch at 1–24 is a signal peptide; that stretch reads MSFLKNQLSRLLALILVVAIGLTA. Cys25 carries the N-palmitoyl cysteine lipid modification. Cys25 carries the S-diacylglycerol cysteine lipid modification.

It belongs to the Psb27 family. As to quaternary structure, monomer. Forms a complex with a monomeric, partially assembled PSII. This is probably the complex in which D1 is assembled and/or replaced. Present in 6-10% of PSII complexes; mostly in monomeric PSII. These PSII do not evolve oxygen, do not have an assembled calcium-manganese-oxide cluster. Psb27-containing PSII seem to be assembly intermediates; a wild-type strain includes the intrinsic membrane proteins, Psb27, Pbs28, substoichiometric amounts of PsbO and PsbQ but no PsbU or PsbV, while a ctpA deletion mutant includes the intrinsic membrane proteins (D1 as precursor), Psb27, a very low amount of PsbO and PsbQ, but no PsbU or PsbV. Small amounts of Psb27 interact with the lumenal domain of CP43 (psbC) in wild-type and a ctpA mutant. A small amount can also be detected in monomeric and trimeric photosystem I (PSI), possibly via association with PsaB.

Its subcellular location is the cellular thylakoid membrane. In terms of biological role, plays a role in the repair and/or biogenesis of the calcium-manganese-oxide cluster on the lumenal face of the thylakoid membrane. Photosystem II (PSII) complexes containing this protein are monomeric, are assembly intermediates lacking the calcium-manganese-oxide cluster and miss some of the lumenal subunits. Probably blocks binding of some of the small lumenal subunits. The sequence is that of Photosystem II lipoprotein Psb27 from Synechocystis sp. (strain ATCC 27184 / PCC 6803 / Kazusa).